The chain runs to 512 residues: Centrosomal protein CCDC61 (512 aa).

Position 1 is an N-acetylmethionine (methionine 1). Residues methionine 1 to proline 143 are head domain. 2 coiled-coil regions span residues isoleucine 178 to glutamate 205 and cysteine 248 to glutamate 275. Positions leucine 276–valine 477 are disordered. The residue at position 285 (threonine 285) is a Phosphothreonine. Residues threonine 293–alanine 306 show a composition bias toward basic and acidic residues. Residues serine 334, serine 336, serine 373, and serine 376 each carry the phosphoserine modification. Residues arginine 407–serine 425 show a composition bias toward low complexity. 2 positions are modified to phosphoserine: serine 447 and serine 473.

The protein belongs to the CCDC61 family. In terms of assembly, forms homodimers (via head domain). Interacts with CEP170. Interacts with PCM1 and CEP131. Binds tubulin.

Its subcellular location is the cytoplasm. The protein localises to the cytoskeleton. The protein resides in the microtubule organizing center. It localises to the centrosome. It is found in the centriolar satellite. Its subcellular location is the cilium basal body. Microtubule-binding centrosomal protein required for centriole cohesion, independently of the centrosome-associated protein/CEP250 and rootletin/CROCC linker. In interphase, required for anchoring microtubule at the mother centriole subdistal appendages and for centrosome positioning. During mitosis, may be involved in spindle assembly and chromatin alignment by regulating the organization of spindle microtubules into a symmetrical structure. Has been proposed to play a role in CEP170 recruitment to centrosomes. However, this function could not be confirmed. Plays a non-essential role in ciliogenesis. The chain is Centrosomal protein CCDC61 from Homo sapiens (Human).